A 430-amino-acid chain; its full sequence is MRKYQQGVGLLEAILASAVLGMALVAAGSYYKREAELMIKSSNAFDVIELSSQIQRYASLSKINNRTNPILKDNKAKEFKDADLKWLKLENCLTAGDVPTTGNNNDLQDQFIACDADYRKGDLSYFGSQFEFSTYVHPSNPEIQRQIKQVVSYFQYRGMERAFIGDAAGYVISEAKKKGFSAQDYRIVLIEPDRVGYFESNVISYEEFIENPSARENFLLKATKDRTLALAVSLAQTGEIAMQRDGSVAFLEDTELCWDTAAGSAKSCLSVRYDTVGNKTELDLKQIDVVSAKGLSFESDGKTKTPVVSTYETFQDGGRAKTINAIECPTGLNNRFAAVVSSFSTAGQNANFSSESAKDSQGTTQKDGSKGPHALLSGISLNWTLTNKVWDVTASIGIESGILPTSGIDSGSLLRNPKSLSFIAFQWCEN.

The segment covering 351–366 has biased composition (polar residues); that stretch reads NFSSESAKDSQGTTQK. The disordered stretch occupies residues 351-371; sequence NFSSESAKDSQGTTQKDGSKG.

Involved in TCP pilus biogenesis. In Vibrio cholerae serotype O1 (strain ATCC 39315 / El Tor Inaba N16961), this protein is Toxin coregulated pilus biosynthesis protein B (tcpB).